Here is a 302-residue protein sequence, read N- to C-terminus: Heme A synthase (302 aa).

Residues 1-6 (MNKALK) are Cytoplasmic-facing. The chain crosses the membrane as a helical span at residues 7 to 27 (GLGIITTIAMLFVLIGGALVT). The Extracellular segment spans residues 28–61 (KTGSGMGCGRSWPLCNGSIFPALTLESIIEWSHR). Cysteines 35 and 42 form a disulfide. E57 is a catalytic residue. H60 provides a ligand contact to heme o. Residues 62–82 (FVSGTSGVLVLALAIWTWKKI) form a helical membrane-spanning segment. At 83-91 (GHIRETKFL) the chain is on the cytoplasmic side. A helical transmembrane segment spans residues 92 to 112 (AVMSVVFLILQALLGAAAVVF). The Extracellular segment spans residues 113–120 (GSSALIMA). Residues 121-141 (LHFGISLISFASVLLLTLLVF) form a helical membrane-spanning segment. Position 122 (H122) interacts with heme o. The Cytoplasmic portion of the chain corresponds to 142–158 (EADSKQKSESFYIGKTM). A helical transmembrane segment spans residues 159–179 (QFHMIGIIIYTYVVVYTGAYV). The Extracellular segment spans residues 180–208 (RHTSSSLACLDFPMCSTENGWLPGKFHEW). A disulfide bridge links C188 with C194. Residues 209–229 (VQMGHRAAALLLFAWIIAAAV) traverse the membrane as a helical segment. H213 contributes to the heme b binding site. At 230–242 (HAARQYKNQKRIY) the chain is on the cytoplasmic side. Residues 243–263 (WGWMISLILIILQAASGIAVV) form a helical membrane-spanning segment. Residues 264–272 (YSRLDLGFA) lie on the Extracellular side of the membrane. The chain crosses the membrane as a helical span at residues 273-293 (LAHAFFISCLFGILCYFLLLV). Residue H275 coordinates heme b. The Cytoplasmic segment spans residues 294–302 (ARYRRQVQK).

Belongs to the COX15/CtaA family. Type 1 subfamily. As to quaternary structure, interacts with CtaB. It depends on heme b as a cofactor.

The protein localises to the cell membrane. The catalysed reaction is Fe(II)-heme o + 2 A + H2O = Fe(II)-heme a + 2 AH2. Its pathway is porphyrin-containing compound metabolism; heme A biosynthesis; heme A from heme O: step 1/1. Functionally, catalyzes the conversion of heme O to heme A by two successive hydroxylations of the methyl group at C8. The first hydroxylation forms heme I, the second hydroxylation results in an unstable dihydroxymethyl group, which spontaneously dehydrates, resulting in the formyl group of heme A. This is Heme A synthase from Bacillus licheniformis (strain ATCC 14580 / DSM 13 / JCM 2505 / CCUG 7422 / NBRC 12200 / NCIMB 9375 / NCTC 10341 / NRRL NRS-1264 / Gibson 46).